The sequence spans 337 residues: Heat-inducible transcription repressor HrcA (337 aa).

Belongs to the HrcA family.

In terms of biological role, negative regulator of class I heat shock genes (grpE-dnaK-dnaJ and groELS operons). Prevents heat-shock induction of these operons. The sequence is that of Heat-inducible transcription repressor HrcA from Kocuria rhizophila (strain ATCC 9341 / DSM 348 / NBRC 103217 / DC2201).